The sequence spans 153 residues: Glucose-6-phosphate 1-dehydrogenase (153 aa).

NADP(+) is bound by residues R21 and K120. K120 contacts D-glucose 6-phosphate.

The protein belongs to the glucose-6-phosphate dehydrogenase family.

The protein localises to the cytoplasm. Its subcellular location is the cytosol. It carries out the reaction D-glucose 6-phosphate + NADP(+) = 6-phospho-D-glucono-1,5-lactone + NADPH + H(+). It functions in the pathway carbohydrate degradation; pentose phosphate pathway; D-ribulose 5-phosphate from D-glucose 6-phosphate (oxidative stage): step 1/3. In terms of biological role, cytosolic glucose-6-phosphate dehydrogenase that catalyzes the first and rate-limiting step of the oxidative branch within the pentose phosphate pathway/shunt, an alternative route to glycolysis for the dissimilation of carbohydrates and a major source of reducing power and metabolic intermediates for fatty acid and nucleic acid biosynthetic processes. This Drosophila simulans (Fruit fly) protein is Glucose-6-phosphate 1-dehydrogenase (Zw).